Here is a 392-residue protein sequence, read N- to C-terminus: Succinate--CoA ligase [ADP-forming] subunit beta (392 aa).

The ATP-grasp domain occupies 9 to 248 (KDILKKFGVS…TNEEDPFEVE (240 aa)). Residues lysine 50, 57-59 (GRG), glutamate 103, methionine 106, and glutamate 111 contribute to the ATP site. Asparagine 203 and aspartate 217 together coordinate Mg(2+). Substrate is bound by residues asparagine 268 and 325–327 (GIV).

It belongs to the succinate/malate CoA ligase beta subunit family. As to quaternary structure, heterotetramer of two alpha and two beta subunits. It depends on Mg(2+) as a cofactor.

It catalyses the reaction succinate + ATP + CoA = succinyl-CoA + ADP + phosphate. The catalysed reaction is GTP + succinate + CoA = succinyl-CoA + GDP + phosphate. The protein operates within carbohydrate metabolism; tricarboxylic acid cycle; succinate from succinyl-CoA (ligase route): step 1/1. Functionally, succinyl-CoA synthetase functions in the citric acid cycle (TCA), coupling the hydrolysis of succinyl-CoA to the synthesis of either ATP or GTP and thus represents the only step of substrate-level phosphorylation in the TCA. The beta subunit provides nucleotide specificity of the enzyme and binds the substrate succinate, while the binding sites for coenzyme A and phosphate are found in the alpha subunit. This is Succinate--CoA ligase [ADP-forming] subunit beta from Chlorobium limicola (strain DSM 245 / NBRC 103803 / 6330).